Consider the following 178-residue polypeptide: MSELTTLARPYAVAVFKAAKEAGNIQEWADMLEFLKQVMADPLMQRAASDPKAGKDRFIAKFLDLCKGHVIPEGENFIRLLASNGRLGLVGTIADMFAEFRAEEEGYVDVDVITAYPLEESETTNLNALVEKWMSRKGRLHVTVDESLIAGVVLRAGGRVVDASVHGQLQRLAKRLSN.

It belongs to the ATPase delta chain family. F-type ATPases have 2 components, F(1) - the catalytic core - and F(0) - the membrane proton channel. F(1) has five subunits: alpha(3), beta(3), gamma(1), delta(1), epsilon(1). F(0) has three main subunits: a(1), b(2) and c(10-14). The alpha and beta chains form an alternating ring which encloses part of the gamma chain. F(1) is attached to F(0) by a central stalk formed by the gamma and epsilon chains, while a peripheral stalk is formed by the delta and b chains.

It localises to the cell inner membrane. F(1)F(0) ATP synthase produces ATP from ADP in the presence of a proton or sodium gradient. F-type ATPases consist of two structural domains, F(1) containing the extramembraneous catalytic core and F(0) containing the membrane proton channel, linked together by a central stalk and a peripheral stalk. During catalysis, ATP synthesis in the catalytic domain of F(1) is coupled via a rotary mechanism of the central stalk subunits to proton translocation. Functionally, this protein is part of the stalk that links CF(0) to CF(1). It either transmits conformational changes from CF(0) to CF(1) or is implicated in proton conduction. The protein is ATP synthase subunit delta of Methylococcus capsulatus (strain ATCC 33009 / NCIMB 11132 / Bath).